A 203-amino-acid chain; its full sequence is SPbeta prophage-derived uncharacterized protein YouA (203 aa).

Residues 1–23 (MAFLNQDGDKYTSAKDDGTGNPI) form a disordered region. The segment covering 7 to 18 (DGDKYTSAKDDG) has biased composition (basic and acidic residues).

This chain is SPbeta prophage-derived uncharacterized protein YouA (youA), found in Bacillus subtilis (strain 168).